A 360-amino-acid chain; its full sequence is uncharacterized protein (360 aa).

Helical transmembrane passes span 12–32, 52–72, 96–116, 278–298, 306–326, and 336–356; these read ILPL…ITQI, VVLV…VIAV, IQLA…AYYI, IIWP…FLRY, FMPV…HFIL, and FIFA…YLLV.

It localises to the cell membrane. This is an uncharacterized protein from Rickettsia prowazekii (strain Madrid E).